The chain runs to 334 residues: Transaldolase (334 aa).

K136 functions as the Schiff-base intermediate with substrate in the catalytic mechanism.

Belongs to the transaldolase family. Type 1 subfamily. Homodimer.

The protein localises to the cytoplasm. It catalyses the reaction D-sedoheptulose 7-phosphate + D-glyceraldehyde 3-phosphate = D-erythrose 4-phosphate + beta-D-fructose 6-phosphate. It functions in the pathway carbohydrate degradation; pentose phosphate pathway; D-glyceraldehyde 3-phosphate and beta-D-fructose 6-phosphate from D-ribose 5-phosphate and D-xylulose 5-phosphate (non-oxidative stage): step 2/3. Transaldolase is important for the balance of metabolites in the pentose-phosphate pathway. The polypeptide is Transaldolase (Nostoc punctiforme (strain ATCC 29133 / PCC 73102)).